Reading from the N-terminus, the 1405-residue chain is DNA-directed RNA polymerase subunit beta' (1405 aa).

Zn(2+) contacts are provided by cysteine 70, cysteine 72, cysteine 85, and cysteine 88. 3 residues coordinate Mg(2+): aspartate 460, aspartate 462, and aspartate 464. Cysteine 814, cysteine 888, cysteine 895, and cysteine 898 together coordinate Zn(2+).

Belongs to the RNA polymerase beta' chain family. As to quaternary structure, the RNAP catalytic core consists of 2 alpha, 1 beta, 1 beta' and 1 omega subunit. When a sigma factor is associated with the core the holoenzyme is formed, which can initiate transcription. Mg(2+) is required as a cofactor. The cofactor is Zn(2+).

It carries out the reaction RNA(n) + a ribonucleoside 5'-triphosphate = RNA(n+1) + diphosphate. Its function is as follows. DNA-dependent RNA polymerase catalyzes the transcription of DNA into RNA using the four ribonucleoside triphosphates as substrates. In Shewanella woodyi (strain ATCC 51908 / MS32), this protein is DNA-directed RNA polymerase subunit beta'.